The sequence spans 31 residues: Cytochrome b6-f complex subunit 6 (31 aa).

The chain crosses the membrane as a helical span at residues 4–26 (ITSYFGFLLAALTVTSALFIGLS).

It belongs to the PetL family. As to quaternary structure, the 4 large subunits of the cytochrome b6-f complex are cytochrome b6, subunit IV (17 kDa polypeptide, PetD), cytochrome f and the Rieske protein, while the 4 small subunits are PetG, PetL, PetM and PetN. The complex functions as a dimer.

The protein localises to the plastid. It is found in the chloroplast thylakoid membrane. Functionally, component of the cytochrome b6-f complex, which mediates electron transfer between photosystem II (PSII) and photosystem I (PSI), cyclic electron flow around PSI, and state transitions. PetL is important for photoautotrophic growth as well as for electron transfer efficiency and stability of the cytochrome b6-f complex. In Daucus carota (Wild carrot), this protein is Cytochrome b6-f complex subunit 6.